Here is a 189-residue protein sequence, read N- to C-terminus: Parkinson disease protein 7 (189 aa).

N-acetylalanine is present on Ala-2. 2 S-palmitoyl cysteine lipidation sites follow: Cys-46 and Cys-53. Tyr-67 bears the Phosphotyrosine mark. Catalysis depends on Cys-106, which acts as the Nucleophile. A Cysteine sulfinic acid (-SO2H); alternate modification is found at Cys-106. Residue Cys-106 is the site of S-palmitoyl cysteine; alternate attachment. His-126 is an active-site residue. Lys-130 participates in a covalent cross-link: Glycyl lysine isopeptide (Lys-Gly) (interchain with G-Cter in SUMO). N6-acetyllysine is present on Lys-148. Lys-182 is modified (N6-succinyllysine).

The protein belongs to the peptidase C56 family. In terms of assembly, homodimer. Binds EFCAB6/DJBP and PIAS2. Part of a ternary complex containing PARK7, EFCAB6/DJBP and AR. Interacts (via N-terminus) with OTUD7B. Interacts with BBS1, HIPK1, CLCF1 and MTERF. Forms a complex with PINK1 and PRKN. Interacts (via C-terminus) with NCF1; the interaction is enhanced by LPS and modulates NCF1 phosphorylation and membrane translocation. Interacts with NENF. Requires Deglycase activity does not require glutathione as a cofactor, however, glycated glutathione constitutes a PARK7 substrate. as cofactor. Sumoylated on Lys-130 by PIAS2 or PIAS4; which is enhanced after ultraviolet irradiation and essential for cell-growth promoting activity and transforming activity. In terms of processing, cys-106 is easily oxidized to sulfinic acid. Post-translationally, undergoes cleavage of a C-terminal peptide and subsequent activation of protease activity in response to oxidative stress. As to expression, highly expressed in pancreas, kidney, skeletal muscle, liver, testis and heart. Detected at slightly lower levels in placenta and brain (at protein level). Detected in astrocytes, Sertoli cells, spermatogonia, spermatids and spermatozoa. Expressed by pancreatic islets at higher levels than surrounding exocrine tissues.

Its subcellular location is the cell membrane. It is found in the cytoplasm. The protein localises to the nucleus. It localises to the membrane raft. The protein resides in the mitochondrion. Its subcellular location is the endoplasmic reticulum. It carries out the reaction N(omega)-(1-hydroxy-2-oxopropyl)-L-arginyl-[protein] + H2O = lactate + L-arginyl-[protein] + H(+). The enzyme catalyses N(6)-(1-hydroxy-2-oxopropyl)-L-lysyl-[protein] + H2O = lactate + L-lysyl-[protein] + H(+). It catalyses the reaction S-(1-hydroxy-2-oxopropyl)-L-cysteinyl-[protein] + H2O = lactate + L-cysteinyl-[protein] + H(+). The catalysed reaction is N(omega)-(1-hydroxy-2-oxoethyl)-L-arginyl-[protein] + H2O = L-arginyl-[protein] + glycolate + H(+). It carries out the reaction N(6)-(1-hydroxy-2-oxoethyl)-L-lysyl-[protein] + H2O = glycolate + L-lysyl-[protein] + H(+). The enzyme catalyses S-(1-hydroxy-2-oxoethyl)-L-cysteinyl-[protein] + H2O = glycolate + L-cysteinyl-[protein] + H(+). It catalyses the reaction N(2)-(1-hydroxy-2-oxopropyl)-dGTP + H2O = lactate + dGTP + H(+). The catalysed reaction is N(2)-(1-hydroxy-2-oxopropyl)-GTP + H2O = lactate + GTP + H(+). It carries out the reaction N(2)-(1-hydroxy-2-oxopropyl)-GDP + H2O = lactate + GDP + H(+). The enzyme catalyses N(2)-(1-hydroxy-2-oxopropyl)-GMP + H2O = lactate + GMP + H(+). It catalyses the reaction N(2)-(1-hydroxy-2-oxoethyl)-dGTP + H2O = dGTP + glycolate + H(+). The catalysed reaction is N(2)-(1-hydroxy-2-oxoethyl)-GTP + H2O = glycolate + GTP + H(+). It carries out the reaction N(2)-(1-hydroxy-2-oxoethyl)-GDP + H2O = glycolate + GDP + H(+). The enzyme catalyses N(2)-(1-hydroxy-2-oxoethyl)-GMP + H2O = glycolate + GMP + H(+). It catalyses the reaction an N(2)-(1-hydroxy-2-oxopropyl)-guanosine in RNA + H2O = a guanosine in RNA + lactate + H(+). The catalysed reaction is an N(2)-(1-hydroxy-2-oxopropyl)-2'-deoxyguanosine in DNA + H2O = a 2'-deoxyguanosine in DNA + lactate + H(+). It carries out the reaction an N(2)-(1-hydroxy-2-oxoethyl)-guanosine in RNA + H2O = a guanosine in RNA + glycolate + H(+). The enzyme catalyses an N(2)-(1-hydroxy-2-oxoethyl)-2'-deoxyguanosine in DNA + H2O = a 2'-deoxyguanosine in DNA + glycolate + H(+). Multifunctional protein with controversial molecular function which plays an important role in cell protection against oxidative stress and cell death acting as oxidative stress sensor and redox-sensitive chaperone and protease. It is involved in neuroprotective mechanisms like the stabilization of NFE2L2 and PINK1 proteins, male fertility as a positive regulator of androgen signaling pathway as well as cell growth and transformation through, for instance, the modulation of NF-kappa-B signaling pathway. Has been described as a protein and nucleotide deglycase that catalyzes the deglycation of the Maillard adducts formed between amino groups of proteins or nucleotides and reactive carbonyl groups of glyoxals. But this function is rebuted by other works. As a protein deglycase, repairs methylglyoxal- and glyoxal-glycated proteins, and releases repaired proteins and lactate or glycolate, respectively. Deglycates cysteine, arginine and lysine residues in proteins, and thus reactivates these proteins by reversing glycation by glyoxals. Acts on early glycation intermediates (hemithioacetals and aminocarbinols), preventing the formation of advanced glycation endproducts (AGE) that cause irreversible damage. Also functions as a nucleotide deglycase able to repair glycated guanine in the free nucleotide pool (GTP, GDP, GMP, dGTP) and in DNA and RNA. Is thus involved in a major nucleotide repair system named guanine glycation repair (GG repair), dedicated to reversing methylglyoxal and glyoxal damage via nucleotide sanitization and direct nucleic acid repair. Protects histones from adduction by methylglyoxal, controls the levels of methylglyoxal-derived argininine modifications on chromatin. Able to remove the glycations and restore histone 3, histone glycation disrupts both local and global chromatin architecture by altering histone-DNA interactions as well as histone acetylation and ubiquitination levels. Displays a very low glyoxalase activity that may reflect its deglycase activity. Eliminates hydrogen peroxide and protects cells against hydrogen peroxide-induced cell death. Required for correct mitochondrial morphology and function as well as for autophagy of dysfunctional mitochondria. Plays a role in regulating expression or stability of the mitochondrial uncoupling proteins SLC25A14 and SLC25A27 in dopaminergic neurons of the substantia nigra pars compacta and attenuates the oxidative stress induced by calcium entry into the neurons via L-type channels during pacemaking. Regulates astrocyte inflammatory responses, may modulate lipid rafts-dependent endocytosis in astrocytes and neuronal cells. In pancreatic islets, involved in the maintenance of mitochondrial reactive oxygen species (ROS) levels and glucose homeostasis in an age- and diet dependent manner. Protects pancreatic beta cells from cell death induced by inflammatory and cytotoxic setting. Binds to a number of mRNAs containing multiple copies of GG or CC motifs and partially inhibits their translation but dissociates following oxidative stress. Metal-binding protein able to bind copper as well as toxic mercury ions, enhances the cell protection mechanism against induced metal toxicity. In macrophages, interacts with the NADPH oxidase subunit NCF1 to direct NADPH oxidase-dependent ROS production, and protects against sepsis. This chain is Parkinson disease protein 7, found in Homo sapiens (Human).